The chain runs to 38 residues: MKVRASVKKRSAECIIVRRKGRLYVINKKNPRFKQRQG.

Belongs to the bacterial ribosomal protein bL36 family.

The chain is Large ribosomal subunit protein bL36 from Flavobacterium johnsoniae (strain ATCC 17061 / DSM 2064 / JCM 8514 / BCRC 14874 / CCUG 350202 / NBRC 14942 / NCIMB 11054 / UW101) (Cytophaga johnsonae).